Consider the following 170-residue polypeptide: Probable inosine/xanthosine triphosphatase (170 aa).

7–12 (TTNPVK) lines the substrate pocket. D37 lines the Mg(2+) pocket.

This sequence belongs to the YjjX NTPase family. As to quaternary structure, homodimer. Mg(2+) serves as cofactor. It depends on Mn(2+) as a cofactor.

The catalysed reaction is XTP + H2O = XDP + phosphate + H(+). It catalyses the reaction ITP + H2O = IDP + phosphate + H(+). Its function is as follows. Phosphatase that hydrolyzes non-canonical purine nucleotides such as XTP and ITP to their respective diphosphate derivatives. Probably excludes non-canonical purines from DNA/RNA precursor pool, thus preventing their incorporation into DNA/RNA and avoiding chromosomal lesions. The polypeptide is Probable inosine/xanthosine triphosphatase (Methanopyrus kandleri (strain AV19 / DSM 6324 / JCM 9639 / NBRC 100938)).